The chain runs to 488 residues: Inosine-5'-monophosphate dehydrogenase (488 aa).

CBS domains lie at 93 to 149 (VVTD…NQPV) and 153 to 214 (MTPK…CKDE). Residues aspartate 248 and 248–250 (DSS) contribute to the NAD(+) site. The residue at position 267 (lysine 267) is an N6-acetyllysine. 298–300 (GIG) is a binding site for NAD(+). 2 residues coordinate K(+): glycine 300 and glycine 302. Serine 303 is a binding site for IMP. K(+) is bound at residue cysteine 305. The Thioimidate intermediate role is filled by cysteine 305. Residues 338–340 (DGG), 361–362 (GS), and 385–389 (YRGMG) each bind IMP. Arginine 401 functions as the Proton acceptor in the catalytic mechanism. Glutamate 415 lines the IMP pocket. Residue lysine 428 is modified to N6-acetyllysine. Residues glutamate 469, serine 470, and histidine 471 each contribute to the K(+) site.

The protein belongs to the IMPDH/GMPR family. As to quaternary structure, homotetramer. K(+) serves as cofactor.

The enzyme catalyses IMP + NAD(+) + H2O = XMP + NADH + H(+). Its pathway is purine metabolism; XMP biosynthesis via de novo pathway; XMP from IMP: step 1/1. With respect to regulation, mycophenolic acid (MPA) is a non-competitive inhibitor that prevents formation of the closed enzyme conformation by binding to the same site as the amobile flap. In contrast, mizoribine monophosphate (MZP) is a competitive inhibitor that induces the closed conformation. MPA is a potent inhibitor of mammalian IMPDHs but a poor inhibitor of the bacterial enzymes. MZP is a more potent inhibitor of bacterial IMPDH. Its function is as follows. Catalyzes the conversion of inosine 5'-phosphate (IMP) to xanthosine 5'-phosphate (XMP), the first committed and rate-limiting step in the de novo synthesis of guanine nucleotides, and therefore plays an important role in the regulation of cell growth. This Escherichia coli O157:H7 protein is Inosine-5'-monophosphate dehydrogenase.